Here is an 875-residue protein sequence, read N- to C-terminus: Alanine--tRNA ligase (875 aa).

Zn(2+) is bound by residues His564, His568, Cys666, and His670.

Belongs to the class-II aminoacyl-tRNA synthetase family. In terms of assembly, homotetramer. Requires Zn(2+) as cofactor.

The protein localises to the cytoplasm. The catalysed reaction is tRNA(Ala) + L-alanine + ATP = L-alanyl-tRNA(Ala) + AMP + diphosphate. In terms of biological role, catalyzes the attachment of alanine to tRNA(Ala) in a two-step reaction: alanine is first activated by ATP to form Ala-AMP and then transferred to the acceptor end of tRNA(Ala). Also edits incorrectly charged Ser-tRNA(Ala) and Gly-tRNA(Ala) via its editing domain. The polypeptide is Alanine--tRNA ligase (Yersinia enterocolitica serotype O:8 / biotype 1B (strain NCTC 13174 / 8081)).